A 2726-amino-acid polypeptide reads, in one-letter code: Filamin-C (2726 aa).

An actin-binding region spans residues 1 to 260 (MMNNSNYSDA…VMTYLSQFPK (260 aa)). A Phosphoserine modification is found at Ser-5. 2 Calponin-homology (CH) domains span residues 37–143 (KIQQ…LHYS) and 160–263 (QTPK…KAKL). Filamin repeat units follow at residues 271 to 369 (SKQL…EVNV), 371 to 469 (MALG…PVHV), 470 to 566 (AEAC…EVQV), 567 to 659 (SPEA…IAHI), 663 to 759 (PPDC…RVNV), 760 to 862 (GEGS…HIKV), 863 to 961 (DPSH…VVNV), 962 to 1057 (APPL…AVEG), 1058 to 1150 (VLPP…KATI), 1151 to 1245 (QPVF…RVHV), 1246 to 1345 (QPAV…RVGV), 1346 to 1438 (TEGC…RVPV), 1439 to 1534 (KDVV…KIKV), 1535 to 1631 (LPSH…RIHA), and 1636 to 1735 (DASK…HVLA). At Arg-1003 the chain carries Omega-N-methylarginine. Phosphoserine is present on residues Ser-1162 and Ser-1339. The tract at residues 1736–1759 (CDPLPHVEEPAEMLQMRQPYAPLR) is hinge 1. Filamin repeat units follow at residues 1760–1855 (PGTC…QFYV), 1856–1947 (DAIN…TAKI), 1948–2034 (TGDD…KILV), and 2037–2129 (SEIG…TVKV). The residue at position 2043 (Ser-2043) is a Phosphoserine. The interval 2163 to 2244 (GNWFQMVSAQ…FGSITRQQEG (82 aa)) is intradomain insert; mediate targeting to Z lines. Basic and acidic residues predominate over residues 2193–2210 (EISKTRGGETKREVRVEE). The tract at residues 2193–2214 (EISKTRGGETKREVRVEESTQV) is disordered. The Filamin 20; mediates interaction with XIRP1 repeat unit spans residues 2212–2307 (TQVGGDPFPA…VPGSPFQFTV (96 aa)). Residues Ser-2234 and Ser-2237 each carry the phosphoserine modification. The residue at position 2239 (Thr-2239) is a Phosphothreonine. Over residues 2241–2260 (QQEGEASSQDMTAQVTSPSG) the composition is skewed to polar residues. Residues 2241–2261 (QQEGEASSQDMTAQVTSPSGK) are disordered. 3 Filamin repeats span residues 2310–2402 (LGEG…VVPV), 2404–2497 (SLSD…KIRV), and 2501–2593 (SQAG…KAKV). Positions 2404–2725 (SLSDDARRLT…VPGSPFKVNV (322 aa)) are interaction with INPPL1. Phosphoserine is present on residues Ser-2587, Ser-2618, Ser-2621, Ser-2633, Ser-2715, and Ser-2719. Positions 2594–2630 (TGPRLSGGHSLHETSTVLVETVTKSSSSRGASYSSIP) are hinge 2. The segment at 2594-2726 (TGPRLSGGHS…PGSPFKVNVP (133 aa)) is self-association site, tail. Residues 2631-2725 (KFSSDASKVV…VPGSPFKVNV (95 aa)) form a Filamin 24 repeat.

It belongs to the filamin family. As to quaternary structure, homodimer; the filamin repeat 24 and the second hinge domain are important for dimer formation. Interacts with FLNB, INPPL1, ITGB1A, KCND2, MYOT, MYOZ1 and MYOZ3. Interacts with sarcoglycans SGCD and SGCG. Interacts (via filament repeats 17-18, 20-21 and 24) with USP25 (isoform USP25m only). Interacts with FBLIM1. Interacts with XIRP1; this interaction is mediated by filamin 20 repeat. Interacts with KY. Interacts with IGFN1. Interacts with MICALL2. Interacts with ANK3. Interacts with MICALL2. Interacts with ANK3. Interacts with SYNPO2. In terms of processing, ubiquitinated by FBXL22, leading to proteasomal degradation.

It localises to the cytoplasm. It is found in the membrane. The protein localises to the cytoskeleton. Its subcellular location is the myofibril. The protein resides in the sarcomere. It localises to the z line. Its function is as follows. Muscle-specific filamin, which plays a central role in sarcomere assembly and organization. Critical for normal myogenesis, it probably functions as a large actin-cross-linking protein with structural functions at the Z lines in muscle cells. May be involved in reorganizing the actin cytoskeleton in response to signaling events. The sequence is that of Filamin-C (Flnc) from Mus musculus (Mouse).